Consider the following 221-residue polypeptide: UPF0758 protein YicR (221 aa).

The MPN domain occupies 99-221 (ALLSPEMTRE…YVSFAERGWI (123 aa)). 3 residues coordinate Zn(2+): histidine 170, histidine 172, and aspartate 183. Residues 170-183 (HNHPSGCAEPSKAD) carry the JAMM motif motif.

Belongs to the UPF0758 family. YicR subfamily.

The polypeptide is UPF0758 protein YicR (Salmonella paratyphi A (strain ATCC 9150 / SARB42)).